Reading from the N-terminus, the 370-residue chain is MEISTITMILDTTLVAVFAWVAYKTGSLIWKYTPYSYPNARIRAMEARLLSDQRLLELAESKELENFVVNLEDSDYGKRLSELKSYSVEEIEKALDLSFVDTILLFQKIMPKRVRGFFEVMLEEWDVRNIVNVVKAKITGLPAQDFVIPVGKILNKVKAMVEAKTMEEILVILEGTEYEEPVRKLILKEINLPEFEHLMYSLHYQKLLNYVNSRKGEEKVILSEFVSSLIDSKNISLILRAKASGINAEKLKIMLIPGGSISRNVLEAMISAEDPLMALTELEKTKYAEVVKNSREAVEKGDISTVEKQLRRYIQQRMKEQSQFYPLSVAVALSYMLQKENEIRKLKAIVRLIADRVRPERIKEIVGEVT.

It belongs to the V-ATPase V0D/AC39 subunit family. In terms of assembly, has multiple subunits with at least A(3), B(3), C, D, E, F, H, I and proteolipid K(x).

It is found in the cell membrane. Functionally, component of the A-type ATP synthase that produces ATP from ADP in the presence of a proton gradient across the membrane. The protein is A-type ATP synthase subunit C of Pyrococcus furiosus (strain ATCC 43587 / DSM 3638 / JCM 8422 / Vc1).